The chain runs to 362 residues: P2Y purinoceptor 1 (362 aa).

Over 1 to 40 (MTEALISAALNGTQPELLAGGWAAGNASTKCSLTKTGFQF) the chain is Extracellular. Residues Asn-11 and Asn-26 are each glycosylated (N-linked (GlcNAc...) asparagine). 2 disulfides stabilise this stretch: Cys-31–Cys-285 and Cys-113–Cys-191. Lys-35 contributes to the ADP binding site. Residues 41 to 63 (YYLPTVYILVFITGFLGNSVAIW) traverse the membrane as a helical segment. The Cytoplasmic portion of the chain corresponds to 64–76 (MFVFHMRPWSGIS). The helical transmembrane segment at 77–98 (VYMFNLALADFLYVLTLPALIF) threads the bilayer. The Extracellular segment spans residues 99–114 (YYFNKTDWIFGDVMCK). Asn-102 carries N-linked (GlcNAc...) asparagine glycosylation. A helical membrane pass occupies residues 115 to 136 (LQRFIFHVNLYGSILFLTCISV). The Cytoplasmic segment spans residues 137–155 (HRYTGVVHPLKSLGRLKKK). A helical membrane pass occupies residues 156-177 (NAVYVSSLVWALVVAVIAPILF). Residues 178–203 (YSGTGVRRNKTITCYDTTADEYLRSY) are Extracellular-facing. N-linked (GlcNAc...) asparagine glycosylation is present at Asn-186. Residue 192–194 (YDT) participates in ADP binding. A helical transmembrane segment spans residues 204–226 (FVYSMCTTVFMFCIPFIVILGCY). Topologically, residues 227-249 (GLIVKALIYKDLDNSPLRRKSIY) are cytoplasmic. Residues 250-273 (LVIIVLTVFAVSYLPFHVMKTLNL) form a helical membrane-spanning segment. ADP contacts are provided by residues 272 to 276 (NLRAR), 292 to 295 (YATY), and Arg-299. At 274 to 292 (RARLDFQTPQMCAFNDKVY) the chain is on the extracellular side. The chain crosses the membrane as a helical span at residues 293 to 314 (ATYQVTRGLASLNSCVDPILYF). Topologically, residues 315–362 (LAGDTFRRRLSRATRKSSRRSEPNVQSKSEEMTLNILTEYKQNGDTSL) are cytoplasmic.

This sequence belongs to the G-protein coupled receptor 1 family. Mainly found in blood, brain, and lung. To a lesser extent in stomach, gut and skeletal muscle.

Its subcellular location is the cell membrane. Its function is as follows. Receptor for extracellular adenine nucleotides such as ADP. In platelets, binding to ADP leads to mobilization of intracellular calcium ions via activation of phospholipase C, a change in platelet shape, and ultimately platelet aggregation. The chain is P2Y purinoceptor 1 (P2RY1) from Meleagris gallopavo (Wild turkey).